Consider the following 215-residue polypeptide: Small ribosomal subunit protein uS3 (215 aa).

Residues 39-109 (IRKFIKKRLE…EVLVDVKEVK (71 aa)) form the KH type-2 domain.

It belongs to the universal ribosomal protein uS3 family. Part of the 30S ribosomal subunit. Forms a tight complex with proteins S10 and S14.

In terms of biological role, binds the lower part of the 30S subunit head. Binds mRNA in the 70S ribosome, positioning it for translation. The polypeptide is Small ribosomal subunit protein uS3 (Methylacidiphilum infernorum (isolate V4) (Methylokorus infernorum (strain V4))).